A 1803-amino-acid chain; its full sequence is MKQSVRPIISNVLRKEVALYSTIIGQDKGKEPTGRTYTSGPKPASHIEVPHHVTVPATDRTPNPDAQFFQSVDGSQATSHVAYALSDTAFIYPITPSSVMGELADVWMAQGRKNAFGQVVDVREMQSEAGAAGALHGALAAGAIATTFTASQGLLLMIPNMYKIAGELMPSVIHVAARELAGHALSIFGGHADVMAVRQTGWAMLCSHTVQQSHDMALISHVATLKSSIPFVHFFDGFRTSHEVNKIKMLPYAELKKLVPPGTMEQHWARSLNPMHPTIRGTNQSADIYFQNMESANQYYTDLAEVVQETMDEVAPYIGRHYKIFEYVGAPDAEEVTVLMGSGATTVNEAVDLLVKRGKKVGAVLVHLYRPWSTKAFEKVLPKTVKRIAALDRCKEVTALGEPLYLDVSATLNLFPERQNVKVIGGRYGLGSKDFIPEHALAIYANLASENPIQRFTVGITDDVTGTSVPFVNERVDTLPEGTRQCVFWGIGSDGTVGANRSAVRIIGDNSDLMVQAYFQFDAFKSGGVTSSHLRFGPKPITAQYLVTNADYIACHFQEYVKRFDMLDAIREGGTFVLNSRWTTEDMEKEIPADFRRNVAQKKVRFYNVDARKICDSFGLGKRINMLMQACFFKLSGVLPLAEAQRLLNESIVHEYGKKGGKVVEMNQAVVNAVFAGDLPQEVQVPAAWANAVDTSTRTPTGIEFVDKIMRPLMDFKGDQLPVSVMTPGGTFPVGTTQYAKRAIAAFIPQWIPANCTQCNYCSYVCPHATIRPFVLTDQEVQLAPESFVTRKAKGDYQGMNFRIQVAPEDCTGCQVCVETCPDDALEMTDAFTATPVQRTNWEFAIKVPNRGTMTDRYSLKGSQFQQPLLEFSGACEGCGETPYVKLLTQLFGERTVIANATGCSSIWGGTAGLAPYTTNAKGQGPAWGNSLFEDNAEFGFGIAVANAQKRSRVRDCILQAVEKKVADEGLTTLLAQWLQDWNTGDKTLKYQDQIIAGLAQQRSKDPLLEQIYGMKDMLPNISQWIIGGDGWANDIGFGGLDHVLASGQNLNVLVLDTEMYSNTGGQASKSTHMASVAKFALGGKRTNKKNLTEMAMSYGNVYVATVSHGNMAQCVKAFVEAESYDGPSLIVGYAPCIEHGLRAGMARMVQESEAAIATGYWPLYRFDPRLATEGKNPFQLDSKRIKGNLQEYLDRQNRYVNLKKNNPKGADLLKSQMADNITARFNRYRRMLEGPNTKAAAPSGNHVTILYGSETGNSEGLAKELATDFERREYSVAVQALDDIDVADLENMGFVVIAVSTCGQGQFPRNSQLFWRELQRDKPEGWLKNLKYTVFGLGDSTYYFYCHTAKQIDARLAALGAQRVVPIGFGDDGDEDMFHTGFNNWIPSVWNELKTKTPEEALFTPSIAVQLTPNATPQDFHFAKSTPVLSITGAERITPADHTRNFVTIRWKTDLSYQVGDSLGVFPENTRSVVEEFLQYYGLNPKDVITIENKGSRELPHCMAVGDLFTKVLDILGKPNNRFYKTLSYFAVDKAEKERLLKIAEMGPEYSNILSEMYHYADIFHMFPSARPTLQYLIEMIPNIKPRYYSISSAPIHTPGEVHSLVLIDTWITLSGKHRTGLTCTMLEHLQAGQVVDGCIHPTAMEFPDHEKPVVMCAMGSGLAPFVAFLRERSTLRKQGKKTGNMALYFGNRYEKTEFLMKEELKGHINDGLLTLRCAFSRDDPKKKVYVQDLIKMDEKMMYDYLVVQKGSMYCCGSRSFIKPVQESLKHCFMKAGGLTAEQAENEVIDMFTTGRYNIEAW.

Residues 1–37 (MKQSVRPIISNVLRKEVALYSTIIGQDKGKEPTGRTY) constitute a mitochondrion transit peptide. 4Fe-4S ferredoxin-type domains lie at 747–776 (FIPQ…PFVL) and 802–831 (FRIQ…MTDA). [4Fe-4S] cluster is bound by residues Cys-756, Cys-759, Cys-762, Cys-766, Cys-811, Cys-814, Cys-817, and Cys-821. The 144-residue stretch at 1248–1391 (VTILYGSETG…GFNNWIPSVW (144 aa)) folds into the Flavodoxin-like domain. The FAD-binding FR-type domain maps to 1425–1650 (KSTPVLSITG…IHPTAMEFPD (226 aa)). FAD is bound by residues 1458-1469 (YQVGDSLGVFPE) and 1585-1595 (IKPRYYSISSA).

This sequence in the N-terminal section; belongs to the pyruvate:ferredoxin/flavodoxin oxidoreductase family. As to quaternary structure, homodimer. The cofactor is FAD. FMN serves as cofactor. Thiamine diphosphate is required as a cofactor. Requires iron-sulfur cluster as cofactor.

The protein resides in the mitochondrion. It carries out the reaction pyruvate + NADP(+) + CoA = acetyl-CoA + CO2 + NADPH. Pyruvate dehydrogenase [NADP(+)] is one of three enzymes participating in respiratory metabolism. The enzyme is also active with 2-oxobutyrate and oxaloacetate. The enzyme is oxygen sensitive. In Euglena gracilis, this protein is Pyruvate dehydrogenase [NADP(+)], mitochondrial (PNO).